Consider the following 229-residue polypeptide: MAIGKRLKKIREGIDRTKLYPLDEAVKLVKERAISKFDETIEVAINLGVDPRHADQMVRGVVMLPNGTGRTVRVGVFARGAKADEAKAAGADVVGAEDLVEQVQAGNINFDRCIATPDMMPLVGRLGKVLGPRGMMPNPKIGTVTMDVAGAVKGAKGGSVEFRVEKAGIIQAGVGKASFDADKLVENIKALADAVNKAKPTGAKGTYIQRVAVSSTMGPGVKVEPGTVH.

This sequence belongs to the universal ribosomal protein uL1 family. Part of the 50S ribosomal subunit.

In terms of biological role, binds directly to 23S rRNA. The L1 stalk is quite mobile in the ribosome, and is involved in E site tRNA release. Its function is as follows. Protein L1 is also a translational repressor protein, it controls the translation of the L11 operon by binding to its mRNA. The protein is Large ribosomal subunit protein uL1 of Rhodopseudomonas palustris (strain TIE-1).